A 99-amino-acid polypeptide reads, in one-letter code: Duplicate procyclin (99 aa).

The sequence is that of Duplicate procyclin from Trypanosoma brucei brucei.